A 509-amino-acid polypeptide reads, in one-letter code: tRNA-2-methylthio-N(6)-dimethylallyladenosine synthase (509 aa).

Positions 1–20 (MNEKQKQESGQVNPADKTSE) are disordered. Positions 66-184 (RKFYIRTYGC…LPELLSEAYL (119 aa)) constitute an MTTase N-terminal domain. [4Fe-4S] cluster is bound by residues Cys-75, Cys-111, Cys-145, Cys-221, Cys-225, and Cys-228. Residues 207–437 (RNGKIKGWVN…NDLVKEISAK (231 aa)) form the Radical SAM core domain. Residues 440–503 (KEYEGRTVEV…TWSLDGVMAG (64 aa)) form the TRAM domain.

It belongs to the methylthiotransferase family. MiaB subfamily. In terms of assembly, monomer. It depends on [4Fe-4S] cluster as a cofactor.

Its subcellular location is the cytoplasm. The enzyme catalyses N(6)-dimethylallyladenosine(37) in tRNA + (sulfur carrier)-SH + AH2 + 2 S-adenosyl-L-methionine = 2-methylsulfanyl-N(6)-dimethylallyladenosine(37) in tRNA + (sulfur carrier)-H + 5'-deoxyadenosine + L-methionine + A + S-adenosyl-L-homocysteine + 2 H(+). Its function is as follows. Catalyzes the methylthiolation of N6-(dimethylallyl)adenosine (i(6)A), leading to the formation of 2-methylthio-N6-(dimethylallyl)adenosine (ms(2)i(6)A) at position 37 in tRNAs that read codons beginning with uridine. This is tRNA-2-methylthio-N(6)-dimethylallyladenosine synthase from Bacillus velezensis (strain DSM 23117 / BGSC 10A6 / LMG 26770 / FZB42) (Bacillus amyloliquefaciens subsp. plantarum).